A 150-amino-acid polypeptide reads, in one-letter code: Deoxyuridine 5'-triphosphate nucleotidohydrolase (150 aa).

Residues Arg-69 to Gly-71, Asn-82, Leu-86 to Asp-88, and Met-96 contribute to the substrate site.

It belongs to the dUTPase family. Mg(2+) is required as a cofactor.

It catalyses the reaction dUTP + H2O = dUMP + diphosphate + H(+). The protein operates within pyrimidine metabolism; dUMP biosynthesis; dUMP from dCTP (dUTP route): step 2/2. Its function is as follows. This enzyme is involved in nucleotide metabolism: it produces dUMP, the immediate precursor of thymidine nucleotides and it decreases the intracellular concentration of dUTP so that uracil cannot be incorporated into DNA. This Acinetobacter baylyi (strain ATCC 33305 / BD413 / ADP1) protein is Deoxyuridine 5'-triphosphate nucleotidohydrolase.